A 121-amino-acid chain; its full sequence is Small ribosomal subunit protein uS13 (121 aa).

The tract at residues H91–K121 is disordered. Residues Q100 to K121 are compositionally biased toward basic residues.

It belongs to the universal ribosomal protein uS13 family. In terms of assembly, part of the 30S ribosomal subunit. Forms a loose heterodimer with protein S19. Forms two bridges to the 50S subunit in the 70S ribosome.

Located at the top of the head of the 30S subunit, it contacts several helices of the 16S rRNA. In the 70S ribosome it contacts the 23S rRNA (bridge B1a) and protein L5 of the 50S subunit (bridge B1b), connecting the 2 subunits; these bridges are implicated in subunit movement. Contacts the tRNAs in the A and P-sites. The protein is Small ribosomal subunit protein uS13 of Prochlorococcus marinus (strain MIT 9211).